We begin with the raw amino-acid sequence, 539 residues long: Putative cysteine ligase BshC (539 aa).

ADP contacts are provided by residues serine 146 and 384–386 (ERH). The stretch at 455–475 (LLKNAAFIQDQLQFLERTVMK) forms a coiled coil. ADP-binding positions include 490-493 (RIQN), tryptophan 506, and tyrosine 510.

This sequence belongs to the BshC family. Homodimer in solution.

Functionally, involved in bacillithiol (BSH) biosynthesis. May catalyze the last step of the pathway, the addition of cysteine to glucosamine malate (GlcN-Mal) to generate BSH. In Bacillus subtilis (strain 168), this protein is Putative cysteine ligase BshC.